Here is a 349-residue protein sequence, read N- to C-terminus: Aminomethyltransferase (349 aa).

The protein belongs to the GcvT family. The glycine cleavage system is composed of four proteins: P, T, L and H.

It carries out the reaction N(6)-[(R)-S(8)-aminomethyldihydrolipoyl]-L-lysyl-[protein] + (6S)-5,6,7,8-tetrahydrofolate = N(6)-[(R)-dihydrolipoyl]-L-lysyl-[protein] + (6R)-5,10-methylene-5,6,7,8-tetrahydrofolate + NH4(+). Its function is as follows. The glycine cleavage system catalyzes the degradation of glycine. The protein is Aminomethyltransferase of Thermus thermophilus (strain ATCC BAA-163 / DSM 7039 / HB27).